The chain runs to 396 residues: Protein btn1 (396 aa).

Helical transmembrane passes span 15–35 (CFLI…SAAL), 45–65 (GVVL…ASIL), 76–96 (IGFC…SSSV), 138–158 (LAGL…NFSV), 161–181 (TLII…FVLP), 234–254 (FLVY…LLFP), 296–316 (LAIT…LYLT), and 321–341 (FVLF…VNVY).

This sequence belongs to the battenin family.

Its subcellular location is the endoplasmic reticulum membrane. It localises to the vacuole membrane. Functionally, involved in vacuolar transport and vacuole pH homeostasis. Also required for cytokinesis. In Schizosaccharomyces pombe (strain 972 / ATCC 24843) (Fission yeast), this protein is Protein btn1.